A 1154-amino-acid chain; its full sequence is Large proline-rich protein BAG6 (1154 aa).

At methionine 1 the chain carries N-acetylmethionine. The Ubiquitin-like domain maps to 17-92 (LEVLVKTLDS…HLVERAPPQT (76 aa)). Disordered regions lie at residues 87–125 (RAPPQTQLPSGASSGTGSASATHGGAPLPGTRGPGASVH), 186–274 (RGGT…HPSP), 387–442 (TMTG…SSHP), 463–531 (QDSG…QGAG), and 568–626 (AQAQ…SAAD). The residue at position 96 (serine 96) is a Phosphoserine. The span at 96-112 (SGASSGTGSASATHGGA) shows a compositional bias: low complexity. Residue threonine 117 is modified to Phosphothreonine. The span at 209-218 (VALNSQTSEP) shows a compositional bias: polar residues. Repeat 1 spans residues 237–271 (RPPTQTPELAPSGPAPAGPAPAGPAPAPETNAPNH). The segment at 237–658 (RPPTQTPELA…MASPTITVAM (422 aa)) is 4 X 29 AA approximate repeats. Pro residues predominate over residues 249–263 (GPAPAGPAPAGPAPA). Residues 400–409 (GAEAATPGSA) show a composition bias toward low complexity. Polar residues predominate over residues 410 to 426 (QATSLPPSSTTVDSSTE). The stretch at 416–444 (PSSTTVDSSTEGAPPPGPAPPPASSHPRV) is repeat 2. Composition is skewed to pro residues over residues 428-439 (APPPGPAPPPAS) and 508-521 (PTPPQARPSHPGGP). Low complexity-rich tracts occupy residues 568 to 581 (AQAQAQAQAQAQAP) and 591 to 609 (PATASASAGTTNTATTAGP). 2 repeat units span residues 597–624 (SAGTTNTATTAGPAPGGPAQPPPPQPSA) and 630–658 (SQLLGNLLGPAGPGAGGPGMASPTITVAM). Pro residues predominate over residues 611-622 (PGGPAQPPPPQP). Disordered regions lie at residues 673-719 (QASQ…ESLP) and 968-1154 (PPQT…ADDP). Over residues 678 to 702 (APPPPPPPPPPPPAPEQQSTPPPGS) the composition is skewed to pro residues. Phosphoserine is present on residues serine 986 and serine 995. Residues 1029–1042 (AEPWAAAVPPEWVP) show a composition bias toward low complexity. The tract at residues 1032–1062 (WAAAVPPEWVPIIQQDIQSQRKVKPQPPLSD) is required for interaction with GET4. The Nuclear localization site signature appears at 1034–1076 (AAVPPEWVPIIQQDIQSQRKVKPQPPLSDAYLSGMPAKRRKTM). The tract at residues 1044–1154 (IQQDIQSQRK…NAHRAFADDP (111 aa)) is sufficient for the delivery of client proteins to the endoplasmic reticulum. Threonine 1075 carries the phosphothreonine modification. Residues 1080–1137 (GPQLLLSEAVSRAAKAAGARPLTSPESLSRDLEAPEVQESYRQQLRSDIQKRLQEDPN) are BAG-similar domain, required and sufficient for interaction with UBL4A. A compositionally biased stretch (low complexity) spans 1088 to 1098 (AVSRAAKAAGA). 2 positions are modified to phosphoserine: serine 1103 and serine 1139.

Component of the BAG6/BAT3 complex, also named BAT3 complex, at least composed of BAG6, UBL4A and GET4/TRC35. Interacts with GET4; the interaction is direct and localizes BAG6 in the cytosol. Interacts with UBL4A; the interaction is direct and required for UBL4A protein stability. Interacts with AIFM1. Interacts with HSPA2. Interacts with CTCFL. Interacts with p300/EP300. Interacts (via ubiquitin-like domain) with RNF126; required for BAG6-dependent ubiquitination of proteins mislocalized to the cytosol. Interacts (via ubiquitin-like domain) with SGTA; SGTA competes with RNF126 by binding the same region of BAG6, thereby promoting deubiquitination of BAG6-target proteins and rescuing them from degradation. Interacts with ricin A chain. Interacts with VCP and AMFR; both form the VCP/p97-AMFR/gp78 complex. Interacts with SYVN1. Interacts with USP13; the interaction is direct and may mediate UBL4A deubiquitination. Interacts with ZFAND2B. Interacts with KPNA2. Interacts with UBQLN4. In terms of processing, ricin can induce a cleavage by the caspase CASP3. The released C-terminal peptide induces apoptosis.

The protein localises to the cytoplasm. The protein resides in the cytosol. It localises to the nucleus. It is found in the secreted. Its subcellular location is the extracellular exosome. In terms of biological role, ATP-independent molecular chaperone preventing the aggregation of misfolded and hydrophobic patches-containing proteins. Functions as part of a cytosolic protein quality control complex, the BAG6/BAT3 complex, which maintains these client proteins in a soluble state and participates in their proper delivery to the endoplasmic reticulum or alternatively can promote their sorting to the proteasome where they undergo degradation. The BAG6/BAT3 complex is involved in the post-translational delivery of tail-anchored/type II transmembrane proteins to the endoplasmic reticulum membrane. Recruited to ribosomes, it interacts with the transmembrane region of newly synthesized tail-anchored proteins and together with SGTA and ASNA1 mediates their delivery to the endoplasmic reticulum. Client proteins that cannot be properly delivered to the endoplasmic reticulum are ubiquitinated by RNF126, an E3 ubiquitin-protein ligase associated with BAG6 and are sorted to the proteasome. SGTA which prevents the recruitment of RNF126 to BAG6 may negatively regulate the ubiquitination and the proteasomal degradation of client proteins. Similarly, the BAG6/BAT3 complex also functions as a sorting platform for proteins of the secretory pathway that are mislocalized to the cytosol either delivering them to the proteasome for degradation or to the endoplasmic reticulum. The BAG6/BAT3 complex also plays a role in the endoplasmic reticulum-associated degradation (ERAD), a quality control mechanism that eliminates unwanted proteins of the endoplasmic reticulum through their retrotranslocation to the cytosol and their targeting to the proteasome. It maintains these retrotranslocated proteins in an unfolded yet soluble state condition in the cytosol to ensure their proper delivery to the proteasome. BAG6 is also required for selective ubiquitin-mediated degradation of defective nascent chain polypeptides by the proteasome. In this context, it may participate in the production of antigenic peptides and play a role in antigen presentation in immune response. BAG6 is also involved in endoplasmic reticulum stress-induced pre-emptive quality control, a mechanism that selectively attenuates the translocation of newly synthesized proteins into the endoplasmic reticulum and reroutes them to the cytosol for proteasomal degradation. BAG6 may ensure the proper degradation of these proteins and thereby protects the endoplasmic reticulum from protein overload upon stress. By inhibiting the polyubiquitination and subsequent proteasomal degradation of HSPA2 it may also play a role in the assembly of the synaptonemal complex during spermatogenesis. Also positively regulates apoptosis by interacting with and stabilizing the proapoptotic factor AIFM1. By controlling the steady-state expression of the IGF1R receptor, indirectly regulates the insulin-like growth factor receptor signaling pathway. Involved in DNA damage-induced apoptosis: following DNA damage, accumulates in the nucleus and forms a complex with p300/EP300, enhancing p300/EP300-mediated p53/TP53 acetylation leading to increase p53/TP53 transcriptional activity. When nuclear, may also act as a component of some chromatin regulator complex that regulates histone 3 'Lys-4' dimethylation (H3K4me2). Its function is as follows. Released extracellularly via exosomes, it is a ligand of the natural killer/NK cells receptor NCR3 and stimulates NK cells cytotoxicity. It may thereby trigger NK cells cytotoxicity against neighboring tumor cells and immature myeloid dendritic cells (DC). Functionally, may mediate ricin-induced apoptosis. The sequence is that of Large proline-rich protein BAG6 from Mus musculus (Mouse).